The chain runs to 117 residues: Large ribosomal subunit protein bL20 (117 aa).

Belongs to the bacterial ribosomal protein bL20 family.

Its function is as follows. Binds directly to 23S ribosomal RNA and is necessary for the in vitro assembly process of the 50S ribosomal subunit. It is not involved in the protein synthesizing functions of that subunit. The protein is Large ribosomal subunit protein bL20 of Idiomarina loihiensis (strain ATCC BAA-735 / DSM 15497 / L2-TR).